The following is a 630-amino-acid chain: Putative polypeptide N-acetylgalactosaminyltransferase 10 (630 aa).

The Cytoplasmic portion of the chain corresponds to Met1–Arg6. Residues Leu7–Met26 form a helical; Signal-anchor for type II membrane protein membrane-spanning segment. The Lumenal portion of the chain corresponds to Gly27–His630. Asn72, Asn84, Asn146, and Asn168 each carry an N-linked (GlcNAc...) asparagine glycan. 3 disulfide bridges follow: Cys157/Cys386, Cys377/Cys456, and Cys496/Cys513. Residues Leu166 to Pro277 form a catalytic subdomain A region. 2 residues coordinate substrate: Asp207 and Arg238. Asp261 provides a ligand contact to Mn(2+). Ser262 serves as a coordination point for substrate. Position 263 (His263) interacts with Mn(2+). Residues Pro333–Lys394 are catalytic subdomain B. Residue Trp363 participates in substrate binding. Residue His391 participates in Mn(2+) binding. The Ricin B-type lectin domain occupies Phe483–Gly618. Asn525 is a glycosylation site (N-linked (GlcNAc...) asparagine). Intrachain disulfides connect Cys543-Cys559 and Cys586-Cys606.

This sequence belongs to the glycosyltransferase 2 family. GalNAc-T subfamily. Requires Mn(2+) as cofactor. In terms of tissue distribution, during embryonic stages 9-11, weakly expressed in the mesoderm. During embryonic stages 12-13, very weak expression is observed in the somatic mesoderm region. No expression detected from stage 14-15. During embryonic stages 16-17, expressed in the epidermis and the antennomaxillary complex. In third instar larvae, expressed ubiquitously in wing, eye-antennal, leg and haltere imaginal disks.

It is found in the golgi apparatus membrane. It carries out the reaction L-seryl-[protein] + UDP-N-acetyl-alpha-D-galactosamine = a 3-O-[N-acetyl-alpha-D-galactosaminyl]-L-seryl-[protein] + UDP + H(+). It catalyses the reaction L-threonyl-[protein] + UDP-N-acetyl-alpha-D-galactosamine = a 3-O-[N-acetyl-alpha-D-galactosaminyl]-L-threonyl-[protein] + UDP + H(+). The protein operates within protein modification; protein glycosylation. Functionally, may catalyze the initial reaction in O-linked oligosaccharide biosynthesis, the transfer of an N-acetyl-D-galactosamine residue to a serine or threonine residue on the protein receptor. The chain is Putative polypeptide N-acetylgalactosaminyltransferase 10 (pgant10) from Drosophila melanogaster (Fruit fly).